Consider the following 372-residue polypeptide: Dual-specificity RNA methyltransferase RlmN (372 aa).

Glutamate 92 (proton acceptor) is an active-site residue. One can recognise a Radical SAM core domain in the interval 98-337 (ETDRATLCVS…VILRKTRGDD (240 aa)). A disulfide bridge connects residues cysteine 105 and cysteine 342. Cysteine 112, cysteine 116, and cysteine 119 together coordinate [4Fe-4S] cluster. Residues 166 to 167 (GE), serine 198, 220 to 222 (SLH), and asparagine 299 contribute to the S-adenosyl-L-methionine site. The active-site S-methylcysteine intermediate is cysteine 342.

Belongs to the radical SAM superfamily. RlmN family. The cofactor is [4Fe-4S] cluster.

It is found in the cytoplasm. The catalysed reaction is adenosine(2503) in 23S rRNA + 2 reduced [2Fe-2S]-[ferredoxin] + 2 S-adenosyl-L-methionine = 2-methyladenosine(2503) in 23S rRNA + 5'-deoxyadenosine + L-methionine + 2 oxidized [2Fe-2S]-[ferredoxin] + S-adenosyl-L-homocysteine. It catalyses the reaction adenosine(37) in tRNA + 2 reduced [2Fe-2S]-[ferredoxin] + 2 S-adenosyl-L-methionine = 2-methyladenosine(37) in tRNA + 5'-deoxyadenosine + L-methionine + 2 oxidized [2Fe-2S]-[ferredoxin] + S-adenosyl-L-homocysteine. In terms of biological role, specifically methylates position 2 of adenine 2503 in 23S rRNA and position 2 of adenine 37 in tRNAs. m2A2503 modification seems to play a crucial role in the proofreading step occurring at the peptidyl transferase center and thus would serve to optimize ribosomal fidelity. This chain is Dual-specificity RNA methyltransferase RlmN, found in Histophilus somni (strain 129Pt) (Haemophilus somnus).